We begin with the raw amino-acid sequence, 385 residues long: NADH-quinone oxidoreductase subunit H (385 aa).

8 helical membrane passes run 14-34, 80-100, 130-150, 172-192, 219-239, 280-300, 325-345, and 365-385; these read GLKLVVIFLMMVQAVPILVWL, FLYYAAPIFALIPGAVAFSAI, IGVGIVFILGVSSLAAYTLLM, ISYELALGLSIVGVIMLYGTF, LPNWGIFYQPVGALLFFSAAF, MMIASGLMVLFFFGGYTIPYV, LIHFLVFNIKFGFFMWVFIWV, and MLPWALANTIITAFVIYIASL.

Belongs to the complex I subunit 1 family. As to quaternary structure, NDH-1 is composed of 14 different subunits. Subunits NuoA, H, J, K, L, M, N constitute the membrane sector of the complex.

It localises to the cell inner membrane. It catalyses the reaction a quinone + NADH + 5 H(+)(in) = a quinol + NAD(+) + 4 H(+)(out). Its function is as follows. NDH-1 shuttles electrons from NADH, via FMN and iron-sulfur (Fe-S) centers, to quinones in the respiratory chain. The immediate electron acceptor for the enzyme in this species is believed to be ubiquinone. Couples the redox reaction to proton translocation (for every two electrons transferred, four hydrogen ions are translocated across the cytoplasmic membrane), and thus conserves the redox energy in a proton gradient. This subunit may bind ubiquinone. The chain is NADH-quinone oxidoreductase subunit H from Bdellovibrio bacteriovorus (strain ATCC 15356 / DSM 50701 / NCIMB 9529 / HD100).